The sequence spans 213 residues: Phosphatidylserine decarboxylase proenzyme (213 aa).

Ser182 functions as the Schiff-base intermediate with substrate; via pyruvic acid in the catalytic mechanism. The residue at position 182 (Ser182) is a Pyruvic acid (Ser); by autocatalysis.

It belongs to the phosphatidylserine decarboxylase family. PSD-A subfamily. In terms of assembly, heterodimer of a large membrane-associated beta subunit and a small pyruvoyl-containing alpha subunit. Requires pyruvate as cofactor. Post-translationally, is synthesized initially as an inactive proenzyme. Formation of the active enzyme involves a self-maturation process in which the active site pyruvoyl group is generated from an internal serine residue via an autocatalytic post-translational modification. Two non-identical subunits are generated from the proenzyme in this reaction, and the pyruvate is formed at the N-terminus of the alpha chain, which is derived from the carboxyl end of the proenzyme. The post-translation cleavage follows an unusual pathway, termed non-hydrolytic serinolysis, in which the side chain hydroxyl group of the serine supplies its oxygen atom to form the C-terminus of the beta chain, while the remainder of the serine residue undergoes an oxidative deamination to produce ammonia and the pyruvoyl prosthetic group on the alpha chain.

Its subcellular location is the cell membrane. The enzyme catalyses a 1,2-diacyl-sn-glycero-3-phospho-L-serine + H(+) = a 1,2-diacyl-sn-glycero-3-phosphoethanolamine + CO2. Its pathway is phospholipid metabolism; phosphatidylethanolamine biosynthesis; phosphatidylethanolamine from CDP-diacylglycerol: step 2/2. Its function is as follows. Catalyzes the formation of phosphatidylethanolamine (PtdEtn) from phosphatidylserine (PtdSer). This is Phosphatidylserine decarboxylase proenzyme from Geotalea daltonii (strain DSM 22248 / JCM 15807 / FRC-32) (Geobacter daltonii).